A 118-amino-acid chain; its full sequence is UPF0058 protein MJ1132 (118 aa).

Belongs to the UPF0058 family.

The chain is UPF0058 protein MJ1132 from Methanocaldococcus jannaschii (strain ATCC 43067 / DSM 2661 / JAL-1 / JCM 10045 / NBRC 100440) (Methanococcus jannaschii).